The chain runs to 511 residues: Coatomer subunit delta (511 aa).

Basic and acidic residues predominate over residues 168 to 177; the sequence is QARRDAERQG. The interval 168-188 is disordered; it reads QARRDAERQGKKAPGFGGFGS. S223 is modified (phosphoserine). An N6-acetyllysine mark is found at K233 and K241. At S244 the chain carries Phosphoserine. The region spanning 271–511 is the MHD domain; the sequence is MESVHMKIEE…TFLVDKYEIL (241 aa). N6-acetyllysine is present on residues K309 and K351. Phosphoserine is present on S493.

Belongs to the adaptor complexes medium subunit family. Delta-COP subfamily. Oligomeric complex that consists of at least the alpha, beta, beta', gamma, delta, epsilon and zeta subunits.

The protein resides in the cytoplasm. Its subcellular location is the golgi apparatus membrane. It is found in the cytoplasmic vesicle. The protein localises to the COPI-coated vesicle membrane. The coatomer is a cytosolic protein complex that binds to dilysine motifs and reversibly associates with Golgi non-clathrin-coated vesicles, which further mediate biosynthetic protein transport from the ER, via the Golgi up to the trans Golgi network. Coatomer complex is required for budding from Golgi membranes, and is essential for the retrograde Golgi-to-ER transport of dilysine-tagged proteins. In mammals, the coatomer can only be recruited by membranes associated to ADP-ribosylation factors (ARFs), which are small GTP-binding proteins; the complex also influences the Golgi structural integrity, as well as the processing, activity, and endocytic recycling of LDL receptors. This is Coatomer subunit delta (Arcn1) from Rattus norvegicus (Rat).